The following is a 484-amino-acid chain: ATP synthase subunit beta, chloroplastic (484 aa).

Residue 163 to 170 participates in ATP binding; it reads GGAGVGKT.

This sequence belongs to the ATPase alpha/beta chains family. F-type ATPases have 2 components, CF(1) - the catalytic core - and CF(0) - the membrane proton channel. CF(1) has five subunits: alpha(3), beta(3), gamma(1), delta(1), epsilon(1). CF(0) has four main subunits: a(1), b(1), b'(1) and c(9-12).

It is found in the plastid. The protein resides in the chloroplast thylakoid membrane. It carries out the reaction ATP + H2O + 4 H(+)(in) = ADP + phosphate + 5 H(+)(out). Produces ATP from ADP in the presence of a proton gradient across the membrane. The catalytic sites are hosted primarily by the beta subunits. This chain is ATP synthase subunit beta, chloroplastic, found in Stigeoclonium helveticum (Green alga).